The sequence spans 490 residues: MHHCKRYRSPEPDPYLSYRWKRRRSYSREHEGRLRYPSRREPPPRRSRSRSHDRLPYQRRYRERRDSDTYRCEERSPSFGEDYYGPSRSRHRRRSRERGPYRTRKHAHHCHKRRTRSCSSASSRSQQSSKRSSRSVEDDKEGHLVCRIGDWLQERYEIVGNLGEGTFGKVVECLDHARGKSQVALKIIRNVGKYREAARLEINVLKKIKEKDKENKFLCVLMSDWFNFHGHMCIAFELLGKNTFEFLKENNFQPYPLPHVRHMAYQLCHALRFLHENQLTHTDLKPENILFVNSEFETLYNEHKSCEEKSVKNTSIRVADFGSATFDHEHHTTIVATRHYRPPEVILELGWAQPCDVWSIGCILFEYYRGFTLFQTHENREHLVMMEKILGPIPSHMIHRTRKQKYFYKGGLVWDENSSDGRYVKENCKPLKSYMLQDSLEHVQLFDLMRRMLEFDPAQRITLAEALLHPFFAGLTPEERSFHTSRNPSR.

The tract at residues 1–138 is disordered; sequence MHHCKRYRSP…SKRSSRSVED (138 aa). A Phosphotyrosine modification is found at Tyr7. Residues Ser9, Ser49, Ser51, Ser67, Ser76, and Ser78 each carry the phosphoserine modification. 2 stretches are compositionally biased toward basic and acidic residues: residues 26-56 and 63-76; these read YSRE…DRLP and ERRD…EERS. Positions 88–116 are enriched in basic residues; that stretch reads RSRHRRRSRERGPYRTRKHAHHCHKRRTR. Positions 117-130 are enriched in low complexity; the sequence is SCSSASSRSQQSSK. The residue at position 135 (Ser135) is a Phosphoserine. The Protein kinase domain occupies 156-472; that stretch reads YEIVGNLGEG…LAEALLHPFF (317 aa). ATP contacts are provided by residues 162–170 and Lys186; that span reads LGEGTFGKV. The active-site Proton acceptor is Asp283.

Belongs to the protein kinase superfamily. CMGC Ser/Thr protein kinase family. Lammer subfamily. In terms of processing, autophosphorylates on all three types of residues. Endothelial cells.

Its subcellular location is the nucleus. The protein resides in the cytoplasm. The protein localises to the cytoplasmic vesicle. It localises to the secretory vesicle. It is found in the acrosome. Its subcellular location is the nucleus speckle. The catalysed reaction is L-seryl-[protein] + ATP = O-phospho-L-seryl-[protein] + ADP + H(+). The enzyme catalyses L-threonyl-[protein] + ATP = O-phospho-L-threonyl-[protein] + ADP + H(+). It catalyses the reaction L-tyrosyl-[protein] + ATP = O-phospho-L-tyrosyl-[protein] + ADP + H(+). Leucettine L41 inhibits its kinase activity and affects the regulation of alternative splicing mediated by phosphorylation of SR proteins. In terms of biological role, dual specificity kinase acting on both serine/threonine and tyrosine-containing substrates. Phosphorylates serine- and arginine-rich (SR) proteins of the spliceosomal complex. May be a constituent of a network of regulatory mechanisms that enable SR proteins to control RNA splicing and can cause redistribution of SR proteins from speckles to a diffuse nucleoplasmic distribution. Phosphorylates SRSF1 and SRSF3. Regulates the alternative splicing of tissue factor (F3) pre-mRNA in endothelial cells. The protein is Dual specificity protein kinase CLK3 of Homo sapiens (Human).